A 75-amino-acid polypeptide reads, in one-letter code: Putative sulfur carrier protein TsuB (75 aa).

Cysteine 13 (cysteine persulfide intermediate) is an active-site residue.

It belongs to the sulfur carrier protein TusA family.

Involved in thiosulfate metabolism. The polypeptide is Putative sulfur carrier protein TsuB (Escherichia coli (strain K12)).